Consider the following 406-residue polypeptide: uncharacterized protein (406 aa).

This is an uncharacterized protein from Aquifex aeolicus (strain VF5).